The following is a 375-amino-acid chain: Succinyl-diaminopimelate desuccinylase (375 aa).

His66 serves as a coordination point for Zn(2+). The active site involves Asp68. Position 99 (Asp99) interacts with Zn(2+). The Proton acceptor role is filled by Glu133. The Zn(2+) site is built by Glu134, Glu162, and His348.

The protein belongs to the peptidase M20A family. DapE subfamily. In terms of assembly, homodimer. Requires Zn(2+) as cofactor. It depends on Co(2+) as a cofactor.

The catalysed reaction is N-succinyl-(2S,6S)-2,6-diaminopimelate + H2O = (2S,6S)-2,6-diaminopimelate + succinate. Its pathway is amino-acid biosynthesis; L-lysine biosynthesis via DAP pathway; LL-2,6-diaminopimelate from (S)-tetrahydrodipicolinate (succinylase route): step 3/3. Its function is as follows. Catalyzes the hydrolysis of N-succinyl-L,L-diaminopimelic acid (SDAP), forming succinate and LL-2,6-diaminopimelate (DAP), an intermediate involved in the bacterial biosynthesis of lysine and meso-diaminopimelic acid, an essential component of bacterial cell walls. The sequence is that of Succinyl-diaminopimelate desuccinylase from Klebsiella pneumoniae subsp. pneumoniae (strain ATCC 700721 / MGH 78578).